The chain runs to 92 residues: Small ribosomal subunit protein uS17 (92 aa).

This sequence belongs to the universal ribosomal protein uS17 family. In terms of assembly, part of the 30S ribosomal subunit.

Functionally, one of the primary rRNA binding proteins, it binds specifically to the 5'-end of 16S ribosomal RNA. The chain is Small ribosomal subunit protein uS17 from Wigglesworthia glossinidia brevipalpis.